A 1438-amino-acid chain; its full sequence is DNA polymerase III PolC-type (1438 aa).

Positions 422-578 constitute an Exonuclease domain; it reads YVVFDVETTG…YDTEATAYIF (157 aa).

It belongs to the DNA polymerase type-C family. PolC subfamily.

The protein resides in the cytoplasm. It carries out the reaction DNA(n) + a 2'-deoxyribonucleoside 5'-triphosphate = DNA(n+1) + diphosphate. Required for replicative DNA synthesis. This DNA polymerase also exhibits 3' to 5' exonuclease activity. This Staphylococcus aureus (strain MSSA476) protein is DNA polymerase III PolC-type.